The primary structure comprises 921 residues: Glutamate receptor 3.7 (921 aa).

Residues 1–25 (MGLGIDPSVAITALIVVILVVPMDC) form the signal peptide. Topologically, residues 26–580 (QRPQLVNIGA…WIFLRPFTSR (555 aa)) are extracellular. Residues Asn214, Asn300, Asn330, Asn369, Asn396, Asn478, and Asn568 are each glycosylated (N-linked (GlcNAc...) asparagine). The chain crosses the membrane as a helical span at residues 581–601 (LWCVVLVSFLVIAVVIWILEH). Over 602 to 608 (RINEDFR) the chain is Cytoplasmic. Residues 609–629 (GPPRRQLSTMLLFSFSTLFKR) form a helical membrane-spanning segment. Residues 630 to 640 (NQEDTISNLAR) are Cytoplasmic-facing. The helical transmembrane segment at 641-661 (LVMIVWLFLLMVLTASYTANL) threads the bilayer. Residues 662–822 (TSILTVQQLP…PEPNQLHLKS (161 aa)) lie on the Extracellular side of the membrane. Residues 823 to 843 (FKGLYLVCIAITVSAFLVFVL) form a helical membrane-spanning segment. Residues 844 to 921 (RMIRQFVRYR…VQADTEVPRN (78 aa)) lie on the Cytoplasmic side of the membrane. A disordered region spans residues 896–921 (FRRSDDSNNNPSHVGEVQADTEVPRN).

It belongs to the glutamate-gated ion channel (TC 1.A.10.1) family. May form heteromers. Expressed predominantly in leaves and siliques. Also detected in roots.

The protein localises to the membrane. In terms of biological role, glutamate-gated receptor that probably acts as a non-selective cation channel. May be involved in light-signal transduction and calcium homeostasis via the regulation of calcium influx into cells. The sequence is that of Glutamate receptor 3.7 (GLR3.7) from Arabidopsis thaliana (Mouse-ear cress).